The primary structure comprises 329 residues: DNA-directed RNA polymerase subunit alpha (329 aa).

Positions 1–234 are alpha N-terminal domain (alpha-NTD); the sequence is MQSAVNEFLT…QQLAVFVDLE (234 aa). The alpha C-terminal domain (alpha-CTD) stretch occupies residues 248 to 329; the sequence is IDPVLLRPVD…WPPASLKNND (82 aa).

It belongs to the RNA polymerase alpha chain family. Homodimer. The RNAP catalytic core consists of 2 alpha, 1 beta, 1 beta' and 1 omega subunit. When a sigma factor is associated with the core the holoenzyme is formed, which can initiate transcription.

It catalyses the reaction RNA(n) + a ribonucleoside 5'-triphosphate = RNA(n+1) + diphosphate. Functionally, DNA-dependent RNA polymerase catalyzes the transcription of DNA into RNA using the four ribonucleoside triphosphates as substrates. The sequence is that of DNA-directed RNA polymerase subunit alpha from Saccharophagus degradans (strain 2-40 / ATCC 43961 / DSM 17024).